A 277-amino-acid polypeptide reads, in one-letter code: Tetrahydroxynaphthalene reductase PfmaG (277 aa).

NADP(+) is bound by residues isoleucine 36, aspartate 82, and asparagine 109. Residues serine 158, serine 159, and tyrosine 173 each act as proton donor in the active site. NADP(+)-binding residues include tyrosine 173, lysine 177, isoleucine 206, and threonine 208. Lysine 177 functions as the Lowers pKa of active site Tyr in the catalytic mechanism.

The protein belongs to the short-chain dehydrogenases/reductases (SDR) family.

The catalysed reaction is scytalone + NADP(+) = naphthalene-1,3,6,8-tetrol + NADPH + H(+). Its pathway is pigment biosynthesis; melanin biosynthesis. Tetrahydroxynaphthalene reductase; part of the gene cluster that mediates the biosynthesis of dihydroxynaphthalene (DHN)-melanin, a bluish-green pigment forming a dark layer in the conidial wall that protects the conidia from UV radiations. The first step of the pathway is the production of the pentaketide 1,3,6,8-tetrahydroxynaphthalene (1,3,6,8-THN or T4HN) by the polyketide synthase PfmaE though condensation of acetyl-CoA with malonyl-CoA. T4HN is not stable and easily oxidizes into the stable form flaviolin. T4HN is also substrate of the hydroxynaphthalene reductase PfmaG to yield scytalone. The scytalone dehydratase PfmaJ then reduces scytalone to 1,3,8-THN. 1,3,8-THN is then substrate of the hydroxynaphthalene reductase PfmaI to yield vermelone. Vermelone is further converted by the multicopper oxidase PfmaD to 1,8-DHN. Finally the laccase PFICI_06862 transforms 1,8-DHN to DHN-melanin. The roles of the 5-oxoprolinase PfmaA and the proline iminopeptidase PfmaB within the cluster have not been elucidated yet. The sequence is that of Tetrahydroxynaphthalene reductase PfmaG from Pestalotiopsis fici (strain W106-1 / CGMCC3.15140).